The following is an 856-amino-acid chain: FO synthase (856 aa).

Radical SAM core domains follow at residues 84 to 336 (ISYS…APPN) and 544 to 785 (VTFV…SHIQ). The segment at 85-417 (SYSRKVFIPV…PRVRGHVVAL (333 aa)) is cofG-like. [4Fe-4S] cluster-binding residues include Cys-98, Cys-102, Cys-105, Cys-558, Cys-562, and Cys-565. The interval 521–854 (DGPALEAVAA…RQRTTTYALL (334 aa)) is cofH-like.

In the N-terminal section; belongs to the radical SAM superfamily. CofG family. The protein in the C-terminal section; belongs to the radical SAM superfamily. CofH family. It depends on [4Fe-4S] cluster as a cofactor.

It carries out the reaction 5-amino-6-(D-ribitylamino)uracil + L-tyrosine + S-adenosyl-L-methionine = 5-amino-5-(4-hydroxybenzyl)-6-(D-ribitylimino)-5,6-dihydrouracil + 2-iminoacetate + 5'-deoxyadenosine + L-methionine + H(+). The catalysed reaction is 5-amino-5-(4-hydroxybenzyl)-6-(D-ribitylimino)-5,6-dihydrouracil + S-adenosyl-L-methionine = 7,8-didemethyl-8-hydroxy-5-deazariboflavin + 5'-deoxyadenosine + L-methionine + NH4(+) + H(+). It functions in the pathway cofactor biosynthesis; coenzyme F0 biosynthesis. Catalyzes the radical-mediated synthesis of 7,8-didemethyl-8-hydroxy-5-deazariboflavin (FO) from 5-amino-6-(D-ribitylamino)uracil and L-tyrosine. This Mycobacterium bovis (strain ATCC BAA-935 / AF2122/97) protein is FO synthase (fbiC).